Reading from the N-terminus, the 393-residue chain is Formate-dependent phosphoribosylglycinamide formyltransferase (393 aa).

Residues 22–23 (EL) and Glu82 each bind N(1)-(5-phospho-beta-D-ribosyl)glycinamide. ATP contacts are provided by residues Arg114, Lys155, 160-165 (SSGKGQ), 195-198 (EGFV), and Glu203. Residues 119 to 308 (RLAAEELGLP…EFALHVRAFT (190 aa)) form the ATP-grasp domain. Residues Glu267 and Glu279 each contribute to the Mg(2+) site. N(1)-(5-phospho-beta-D-ribosyl)glycinamide-binding positions include Asp286, Lys356, and 363–364 (RR).

Belongs to the PurK/PurT family. As to quaternary structure, homodimer.

It catalyses the reaction N(1)-(5-phospho-beta-D-ribosyl)glycinamide + formate + ATP = N(2)-formyl-N(1)-(5-phospho-beta-D-ribosyl)glycinamide + ADP + phosphate + H(+). It participates in purine metabolism; IMP biosynthesis via de novo pathway; N(2)-formyl-N(1)-(5-phospho-D-ribosyl)glycinamide from N(1)-(5-phospho-D-ribosyl)glycinamide (formate route): step 1/1. In terms of biological role, involved in the de novo purine biosynthesis. Catalyzes the transfer of formate to 5-phospho-ribosyl-glycinamide (GAR), producing 5-phospho-ribosyl-N-formylglycinamide (FGAR). Formate is provided by PurU via hydrolysis of 10-formyl-tetrahydrofolate. In Vibrio cholerae serotype O1 (strain M66-2), this protein is Formate-dependent phosphoribosylglycinamide formyltransferase.